Reading from the N-terminus, the 356-residue chain is tRNA N6-adenosine threonylcarbamoyltransferase (356 aa).

Positions 115 and 119 each coordinate Fe cation. Substrate-binding positions include 138–142 (LVSGG), D171, G184, and N283. Residue D311 coordinates Fe cation.

The protein belongs to the KAE1 / TsaD family. Requires Fe(2+) as cofactor.

The protein resides in the cytoplasm. It catalyses the reaction L-threonylcarbamoyladenylate + adenosine(37) in tRNA = N(6)-L-threonylcarbamoyladenosine(37) in tRNA + AMP + H(+). Required for the formation of a threonylcarbamoyl group on adenosine at position 37 (t(6)A37) in tRNAs that read codons beginning with adenine. Is involved in the transfer of the threonylcarbamoyl moiety of threonylcarbamoyl-AMP (TC-AMP) to the N6 group of A37, together with TsaE and TsaB. TsaD likely plays a direct catalytic role in this reaction. The polypeptide is tRNA N6-adenosine threonylcarbamoyltransferase (Prochlorococcus marinus (strain MIT 9303)).